The sequence spans 110 residues: uncharacterized protein (110 aa).

Positions 16 to 46 form a coiled coil; it reads ELDKLRECEERLSVIEKQKQSSKQESEETYI. The segment covering 85-96 has biased composition (basic and acidic residues); that stretch reads EEKDKKCQRKPE. Positions 85–110 are disordered; it reads EEKDKKCQRKPEAPSTPAVTIRSKRQ.

This is an uncharacterized protein from Bacillus subtilis (strain 168).